A 163-amino-acid chain; its full sequence is Nucleotide-binding protein APJL_1242 (163 aa).

Belongs to the YajQ family.

Nucleotide-binding protein. This Actinobacillus pleuropneumoniae serotype 3 (strain JL03) protein is Nucleotide-binding protein APJL_1242.